A 594-amino-acid polypeptide reads, in one-letter code: UvrABC system protein C (594 aa).

Residues 13–99 (NSSGVYQYFD…IKQLKPKYNI (87 aa)) form the GIY-YIG domain. Residues 205 to 240 (DRLIKELELKMERLSNNLRFEEALIYRDRIAKIQKI) form the UVR domain.

Belongs to the UvrC family. As to quaternary structure, interacts with UvrB in an incision complex.

It localises to the cytoplasm. Functionally, the UvrABC repair system catalyzes the recognition and processing of DNA lesions. UvrC both incises the 5' and 3' sides of the lesion. The N-terminal half is responsible for the 3' incision and the C-terminal half is responsible for the 5' incision. The polypeptide is UvrABC system protein C (Helicobacter pylori (strain ATCC 700392 / 26695) (Campylobacter pylori)).